The following is a 219-amino-acid chain: N-(5'-phosphoribosyl)anthranilate isomerase (219 aa).

Belongs to the TrpF family.

It catalyses the reaction N-(5-phospho-beta-D-ribosyl)anthranilate = 1-(2-carboxyphenylamino)-1-deoxy-D-ribulose 5-phosphate. Its pathway is amino-acid biosynthesis; L-tryptophan biosynthesis; L-tryptophan from chorismate: step 3/5. This is N-(5'-phosphoribosyl)anthranilate isomerase from Bradyrhizobium sp. (strain ORS 278).